The primary structure comprises 184 residues: Ribosome-recycling factor (184 aa).

This sequence belongs to the RRF family.

The protein localises to the cytoplasm. Responsible for the release of ribosomes from messenger RNA at the termination of protein biosynthesis. May increase the efficiency of translation by recycling ribosomes from one round of translation to another. This is Ribosome-recycling factor from Psychrobacter arcticus (strain DSM 17307 / VKM B-2377 / 273-4).